The following is a 184-amino-acid chain: Inactive cytochrome P450 monooxygenase lolP2 (184 aa).

A helical transmembrane segment spans residues 10-30 (GIVWLTVAAIAISYILQSSFL). The tract at residues 161–184 (RRTRGSRPRSRPRWMPARWSRSSP) is disordered. The span at 163–172 (TRGSRPRSRP) shows a compositional bias: basic residues. The span at 173–184 (RWMPARWSRSSP) shows a compositional bias: low complexity.

This sequence belongs to the cytochrome P450 family.

It localises to the membrane. Cytochrome P450 monooxygenase; part of the gene cluster that mediates the biosynthesis of loline alkaloids, potent insecticidal agents composed of a pyrrolizidine ring system and an uncommon ether bridge linking carbons 2 and 7. Lolines are structurally differentiated by the various modifications of the L-amino group and include norloline, loline, N-methylloline, N-acetylloline, N-acetylnorloline, and N-formylloline. The first committed step is the condensation of O-acetyl-L-homoserine (derived from L-aspartic acid) and L-proline, probably catalyzed by the gamma-type pyridoxal 5'-phosphate(PLP)-dependent enzyme lolC, to give the diamino diacid, NACPP. Ensuing cyclization, decarboxylation, and acetylation steps yield 1-exo-acetamidopyrrolizidine (AcAP). LolO is required for installation of the ether bridge upon the pathway intermediate, 1-exo-acetamidopyrrolizidine (AcAP). In sequential 2-oxoglutarate- and O(2)-consuming steps, lolO removes hydrogens from C2 and C7 of AcAP to form both carbon-oxygen bonds in N-acetylnorloline (NANL), the precursor to all other lolines. The enzymes lolD, lolE, lolF and lolT have also been proposed to be involved in the ether-bridge installation. Further processing of the exocyclic moiety of NANL by fungal N-acetamidase (LolN), methyltransferase (LolM), and cytochrome P450 (LolP) enzymes, with occasional involvement of a plant acetyltransferase, generates the other known lolines. LolN transforms NANL to norlonine which is monomethylated and dimethylated to respectively lonine and N-methyllonine (NML) by lolM. LolP catalyzes hydroxylation of the methyl group in N-methylloline (NML) and further oxygenation to N-formylloline (NFL). A plant acetyltransferase is responsible for the acetylation of loline to form N-acetylloline (NAL). LolA might interact with aspartate kinase to prevent feedback inhibition of its activity by these end products and thereby promote production of L-homoserine from L-aspartate. In Epichloe uncinata (Endophyte fungus), this protein is Inactive cytochrome P450 monooxygenase lolP2.